We begin with the raw amino-acid sequence, 94 residues long: Co-chaperonin GroES (94 aa).

It belongs to the GroES chaperonin family. As to quaternary structure, heptamer of 7 subunits arranged in a ring. Interacts with the chaperonin GroEL.

It localises to the cytoplasm. In terms of biological role, together with the chaperonin GroEL, plays an essential role in assisting protein folding. The GroEL-GroES system forms a nano-cage that allows encapsulation of the non-native substrate proteins and provides a physical environment optimized to promote and accelerate protein folding. GroES binds to the apical surface of the GroEL ring, thereby capping the opening of the GroEL channel. The polypeptide is Co-chaperonin GroES (Bacillus cytotoxicus (strain DSM 22905 / CIP 110041 / 391-98 / NVH 391-98)).